The chain runs to 67 residues: Large ribosomal subunit protein uL30 (67 aa).

Belongs to the universal ribosomal protein uL30 family. In terms of assembly, part of the 50S ribosomal subunit.

The chain is Large ribosomal subunit protein uL30 from Thermotoga maritima (strain ATCC 43589 / DSM 3109 / JCM 10099 / NBRC 100826 / MSB8).